The following is a 58-amino-acid chain: Large ribosomal subunit protein bL32c (58 aa).

Disordered regions lie at residues 1-21 (MAVPKKRTPKSKTRSRKSQWM) and 34-58 (LAGRLAARQDQMQPTQMQPTQMQPN). Over residues 44-58 (QMQPTQMQPTQMQPN) the composition is skewed to low complexity.

The protein belongs to the bacterial ribosomal protein bL32 family.

It is found in the plastid. The protein resides in the chloroplast. This chain is Large ribosomal subunit protein bL32c, found in Cyanidioschyzon merolae (strain NIES-3377 / 10D) (Unicellular red alga).